We begin with the raw amino-acid sequence, 638 residues long: 1-deoxy-D-xylulose-5-phosphate synthase (638 aa).

Thiamine diphosphate contacts are provided by residues His-79 and 120–122; that span reads GHS. Asp-151 serves as a coordination point for Mg(2+). Thiamine diphosphate-binding positions include 152–153, Asn-182, Tyr-291, and Glu-373; that span reads GA. Asn-182 contributes to the Mg(2+) binding site.

Belongs to the transketolase family. DXPS subfamily. As to quaternary structure, homodimer. The cofactor is Mg(2+). Requires thiamine diphosphate as cofactor.

The enzyme catalyses D-glyceraldehyde 3-phosphate + pyruvate + H(+) = 1-deoxy-D-xylulose 5-phosphate + CO2. The protein operates within metabolic intermediate biosynthesis; 1-deoxy-D-xylulose 5-phosphate biosynthesis; 1-deoxy-D-xylulose 5-phosphate from D-glyceraldehyde 3-phosphate and pyruvate: step 1/1. In terms of biological role, catalyzes the acyloin condensation reaction between C atoms 2 and 3 of pyruvate and glyceraldehyde 3-phosphate to yield 1-deoxy-D-xylulose-5-phosphate (DXP). The chain is 1-deoxy-D-xylulose-5-phosphate synthase from Xanthomonas oryzae pv. oryzae (strain MAFF 311018).